The primary structure comprises 614 residues: tRNA uridine 5-carboxymethylaminomethyl modification enzyme MnmG (614 aa).

Residue 10–15 (GAGHAG) coordinates FAD. NAD(+) is bound at residue 271–285 (GPRYCPSIEDKIVKF).

This sequence belongs to the MnmG family. In terms of assembly, homodimer. Heterotetramer of two MnmE and two MnmG subunits. Requires FAD as cofactor.

Its subcellular location is the cytoplasm. NAD-binding protein involved in the addition of a carboxymethylaminomethyl (cmnm) group at the wobble position (U34) of certain tRNAs, forming tRNA-cmnm(5)s(2)U34. The polypeptide is tRNA uridine 5-carboxymethylaminomethyl modification enzyme MnmG (Ureaplasma parvum serovar 3 (strain ATCC 27815 / 27 / NCTC 11736)).